We begin with the raw amino-acid sequence, 845 residues long: Complement component C7 (845 aa).

A signal peptide spans 1–22 (MQVTSLLILVCFIAAFQVFSRA). In terms of domain architecture, TSP type-1 1 spans 27 to 80 (NCKWDSYGPWSECNGCTKTQTRRRSVAVYGQYGGYPCEGSAFETQSCKPERGCP). 6 disulfides stabilise this stretch: cysteine 28–cysteine 63, cysteine 39–cysteine 73, cysteine 42–cysteine 79, cysteine 85–cysteine 96, cysteine 91–cysteine 109, and cysteine 103–cysteine 119. One can recognise an LDL-receptor class A domain in the interval 84 to 120 (GCGDRFRCFSGQCISKSLVCNGDPDCEEDGADEDKCE). An MACPF domain is found at 122-456 (VANPSCNIDK…EYFDEFDPCH (335 aa)). Asparagine 124 is a glycosylation site (N-linked (GlcNAc...) asparagine). Cysteine 127 and cysteine 164 are oxidised to a cystine. The N-linked (GlcNAc...) asparagine glycan is linked to asparagine 201. Disulfide bonds link cysteine 336-cysteine 353, cysteine 433-cysteine 560, cysteine 455-cysteine 505, cysteine 457-cysteine 473, cysteine 460-cysteine 475, cysteine 477-cysteine 486, cysteine 512-cysteine 545, cysteine 523-cysteine 535, cysteine 571-cysteine 613, cysteine 599-cysteine 626, cysteine 631-cysteine 673, cysteine 659-cysteine 688, cysteine 703-cysteine 714, cysteine 716-cysteine 751, cysteine 722-cysteine 744, cysteine 729-cysteine 764, cysteine 774-cysteine 783, cysteine 777-cysteine 790, cysteine 792-cysteine 826, cysteine 798-cysteine 819, and cysteine 806-cysteine 839. Residues 457 to 487 (CRPCQNGGLAIVVETQCQCLCKPYTFGSACE) enclose the EGF-like domain. The TSP type-1 2 domain occupies 500–549 (DGGWNCWSSWSPCVQGKRTRSRECNNPPPRDDGKSCLGETTESKQCEDQD). CCP stretches follow at residues 545-615 (CEDQ…RCGE) and 616-693 (DLQW…QKAT). 2 Sushi domains span residues 569–628 (EFCL…HCQK) and 629–690 (LACV…KCVQ). Factor I module (FIM) stretches follow at residues 695–771 (TPPP…SPAE) and 772–844 (KVCG…EEAA). The N-linked (GlcNAc...) asparagine glycan is linked to asparagine 755.

Belongs to the complement C6/C7/C8/C9 family. As to quaternary structure, monomer or dimer; as a C5b-7 complex it can also form multimeric rosettes. Component of the membrane attack complex (MAC), composed of complement C5b, C6, C7, C8A, C8B, C8G and multiple copies of the pore-forming subunit C9. Post-translationally, C-, N- and O-glycosylated. O-glycosylated with core 1 or possibly core 8 glycans.

The protein resides in the secreted. Its subcellular location is the target cell membrane. Its activity is regulated as follows. Membrane attack complex (MAC) assembly is inhibited by CD59, thereby protecting self-cells from damage during complement activation. MAC assembly is also inhibited by clusterin (CLU) chaperones that inhibit polymerization of C9. In terms of biological role, component of the membrane attack complex (MAC), a multiprotein complex activated by the complement cascade, which inserts into a target cell membrane and forms a pore, leading to target cell membrane rupture and cell lysis. The MAC is initiated by proteolytic cleavage of C5 into complement C5b in response to the classical, alternative, lectin and GZMK complement pathways. The complement pathways consist in a cascade of proteins that leads to phagocytosis and breakdown of pathogens and signaling that strengthens the adaptive immune system. C7 serves as a membrane anchor. During MAC assembly, associates with C5b and C6 to form the C5b-7 complex, a key lipophilic precursor of the MAC complex, which associates with the outer leaflet and reduces the energy for membrane bending. The sequence is that of Complement component C7 from Mus musculus (Mouse).